The primary structure comprises 302 residues: 33 kDa chaperonin (302 aa).

2 disulfide bridges follow: cysteine 234–cysteine 236 and cysteine 267–cysteine 270.

This sequence belongs to the HSP33 family. In terms of processing, under oxidizing conditions two disulfide bonds are formed involving the reactive cysteines. Under reducing conditions zinc is bound to the reactive cysteines and the protein is inactive.

It is found in the cytoplasm. Functionally, redox regulated molecular chaperone. Protects both thermally unfolding and oxidatively damaged proteins from irreversible aggregation. Plays an important role in the bacterial defense system toward oxidative stress. The polypeptide is 33 kDa chaperonin (Neisseria meningitidis serogroup B (strain ATCC BAA-335 / MC58)).